We begin with the raw amino-acid sequence, 179 residues long: Large ribosomal subunit protein uL5 (179 aa).

It belongs to the universal ribosomal protein uL5 family. In terms of assembly, part of the 50S ribosomal subunit; part of the 5S rRNA/L5/L18/L25 subcomplex. Contacts the 5S rRNA and the P site tRNA. Forms a bridge to the 30S subunit in the 70S ribosome.

Functionally, this is one of the proteins that bind and probably mediate the attachment of the 5S RNA into the large ribosomal subunit, where it forms part of the central protuberance. In the 70S ribosome it contacts protein S13 of the 30S subunit (bridge B1b), connecting the 2 subunits; this bridge is implicated in subunit movement. Contacts the P site tRNA; the 5S rRNA and some of its associated proteins might help stabilize positioning of ribosome-bound tRNAs. This is Large ribosomal subunit protein uL5 from Pseudomonas entomophila (strain L48).